Consider the following 506-residue polypeptide: DEAD-box ATP-dependent RNA helicase CshA (506 aa).

The short motif at 2 to 30 is the Q motif element; sequence QNFKELGISDNTVQSLESMGFKEPTPIQK. The Helicase ATP-binding domain occupies 33–203; the sequence is IPYALQGIDI…QQFMKSPKII (171 aa). 46–53 contributes to the ATP binding site; the sequence is AQTGTGKT. Residues 150-153 carry the DEAD box motif; it reads DEAD. Residues 214 to 375 enclose the Helicase C-terminal domain; sequence QIEEFYTIVK…LRPPHRKEVL (162 aa). Residues 436–506 are disordered; sequence EKPLSRKGRN…KGRTFADHQK (71 aa). A compositionally biased stretch (basic residues) spans 468 to 480; sequence KRSKGYSSKKKST.

The protein belongs to the DEAD box helicase family. CshA subfamily. In terms of assembly, oligomerizes, may be a member of the RNA degradosome.

It is found in the cytoplasm. It carries out the reaction ATP + H2O = ADP + phosphate + H(+). Functionally, DEAD-box RNA helicase possibly involved in RNA degradation. Unwinds dsRNA in both 5'- and 3'-directions, has RNA-dependent ATPase activity. This is DEAD-box ATP-dependent RNA helicase CshA from Staphylococcus aureus (strain MW2).